Reading from the N-terminus, the 130-residue chain is Small ribosomal subunit protein eS8 (130 aa).

It belongs to the eukaryotic ribosomal protein eS8 family. In terms of assembly, part of the 30S ribosomal subunit.

In Ignicoccus hospitalis (strain KIN4/I / DSM 18386 / JCM 14125), this protein is Small ribosomal subunit protein eS8.